A 186-amino-acid chain; its full sequence is Ribosome-recycling factor (186 aa).

Belongs to the RRF family.

Its subcellular location is the cytoplasm. In terms of biological role, responsible for the release of ribosomes from messenger RNA at the termination of protein biosynthesis. May increase the efficiency of translation by recycling ribosomes from one round of translation to another. This Methylibium petroleiphilum (strain ATCC BAA-1232 / LMG 22953 / PM1) protein is Ribosome-recycling factor.